A 338-amino-acid polypeptide reads, in one-letter code: DNA fragmentation factor subunit beta (338 aa).

The CIDE-N domain maps to 4–80 (KPKSVKLRAL…LLTLGQAWQG (77 aa)).

In terms of assembly, heterodimer of DFFA and DFFB. Interacts with H1-1.

Its subcellular location is the cytoplasm. The protein localises to the nucleus. With respect to regulation, inhibited by DFFA (DFF45). Functionally, nuclease that induces DNA fragmentation and chromatin condensation during apoptosis. Degrades naked DNA and induces apoptotic morphology. This chain is DNA fragmentation factor subunit beta (DFFB), found in Homo sapiens (Human).